The following is a 141-amino-acid chain: Hemoglobin subunit alpha (141 aa).

The Globin domain occupies 1 to 141 (VLSAADKTHV…VSTVLVSKYR (141 aa)). A Phosphoserine modification is found at Ser-3. Lys-7 carries the post-translational modification N6-succinyllysine. Residue Thr-8 is modified to Phosphothreonine. N6-succinyllysine is present on Lys-11. Lys-16 bears the N6-acetyllysine; alternate mark. Lys-16 bears the N6-succinyllysine; alternate mark. The residue at position 35 (Ser-35) is a Phosphoserine. Lys-40 is modified (N6-succinyllysine). Position 49 is a phosphoserine (Ser-49). O2 is bound at residue His-58. Heme b is bound at residue His-87. Position 102 is a phosphoserine (Ser-102). Phosphothreonine is present on Thr-108. At Ser-124 the chain carries Phosphoserine. A Phosphothreonine modification is found at Thr-134. Residue Ser-138 is modified to Phosphoserine.

The protein belongs to the globin family. Heterotetramer of two alpha chains and two beta chains. In terms of tissue distribution, red blood cells.

In terms of biological role, involved in oxygen transport from the lung to the various peripheral tissues. Functionally, hemopressin acts as an antagonist peptide of the cannabinoid receptor CNR1. Hemopressin-binding efficiently blocks cannabinoid receptor CNR1 and subsequent signaling. This is Hemoglobin subunit alpha (HBA) from Dasypus novemcinctus (Nine-banded armadillo).